Reading from the N-terminus, the 668-residue chain is Ras guanine nucleotide exchange factor D (668 aa).

Positions 27–224 (KKLESIFGIA…LMVMDIDEFD (198 aa)) constitute a Rho-GAP domain. The region spanning 237–362 (GESIVKAATF…YFQTFFKPVI (126 aa)) is the N-terminal Ras-GEF domain. A Ras-GEF domain is found at 433–663 (GSNIIAQQIT…HSISHKLEPR (231 aa)).

Promotes the exchange of Ras-bound GDP by GTP. This is Ras guanine nucleotide exchange factor D (gefD) from Dictyostelium discoideum (Social amoeba).